The following is a 1413-amino-acid chain: ABC transporter G family member 33 (1413 aa).

Low complexity predominate over residues 1–10 (MGSSFRSSSS). The disordered stretch occupies residues 1 to 21 (MGSSFRSSSSRNEHEDGGDEA). Basic and acidic residues predominate over residues 11-21 (RNEHEDGGDEA). One can recognise an ABC transporter 1 domain in the interval 140 to 412 (LKLSGVRTNE…FEECGFQCPE (273 aa)). Residue 172-179 (GPPGCGKT) participates in ATP binding. The ABC transmembrane type-2 1 domain maps to 490–702 (ELFRACISRE…AEIGLSVNEF (213 aa)). Transmembrane regions (helical) follow at residues 509-529 (VYLFKTFQLVLAAIITMTVFI), 546-566 (CLFFATVVLLVDGIPELSMTV), 580-600 (FYPAWAYAIPATVLKIPLSFF), 626-646 (FMILFAVHFTSISMFRCIAAI), 652-672 (AAMTAGSFVMLITFVFAGFAI), and 738-758 (LSALLGLTIIFNTIFTLALSF). One can recognise an ABC transporter 2 domain in the interval 813–1065 (ITFQDLNYYV…CVIEYFQNIP (253 aa)). 858 to 865 (GISGAGKT) lines the ATP pocket. One can recognise an ABC transmembrane type-2 2 domain in the interval 1138–1352 (EQFKSCLWKM…TLNLFFSSQY (215 aa)). Helical transmembrane passes span 1157–1177 (YNLMRIGHTFISSFIFGLLFW), 1189–1209 (LFTVLGAIYGLVLFVGINNCT), 1245–1265 (IPYIFIQSAEFVIVIYPMIGF), 1276–1296 (LYAMFCNLLCFNYLAMFLISI), 1302–1322 (VAAILQSLFFTTFNIFAGFLI), 1330–1350 (WWVWFYYITPTSWTLNLFFSS), and 1385–1405 (ITAIILIAFPIALATMYAFFV).

Belongs to the ABC transporter superfamily. ABCG family. PDR (TC 3.A.1.205) subfamily. In terms of tissue distribution, expressed in roots and stems.

The protein resides in the membrane. Functionally, may be a general defense protein. This Arabidopsis thaliana (Mouse-ear cress) protein is ABC transporter G family member 33 (ABCG33).